A 507-amino-acid chain; its full sequence is MEILVPGRATLAQLEAIWREGRPARLAPEARPAVEAAAARVAEAAAGTAPVYGVNTGFGKLASLKIAPADTAQLQRNLILSHCCGVGEPMPPSTARLMMALKLLSLGRGASGVRWEIVALLEGMLAAGVTPVIPAQGSVGASGDLAPLAHMAAVMIGEGEAEVGGRRLPGAAALAEAGLAPVALGPKEGLALINGTQFSTAYALAGLFEGWRAAQAALVISALSTDAIMGSTAPLRPEIHALRGHAGQIEAAATMRALLEGSAIRESHREGDQRVQDPYCIRCQPQVTGAAMDVLRMAAGTLATEANAATDNPLVLSDGRIVSGGNFHAEPVGFAADMIALALSEIGAIAQRRVALMVDPTLSFDLPPFLTPEPGLNSGLMIAEVTTAALMSENKHMAAPTVTDSTPTSANQEDHVSMAAHGARRLGRMVENLAVILGTEAICAAQGVEFRAPLATSAPLGAVLARLRAEVPRLGADRILAPDLAAAARLVRTGALARAAGLPLPAL.

Positions 141–143 form a cross-link, 5-imidazolinone (Ala-Gly); that stretch reads ASG. Ser-142 bears the 2,3-didehydroalanine (Ser) mark.

This sequence belongs to the PAL/histidase family. Contains an active site 4-methylidene-imidazol-5-one (MIO), which is formed autocatalytically by cyclization and dehydration of residues Ala-Ser-Gly.

The protein resides in the cytoplasm. The catalysed reaction is L-histidine = trans-urocanate + NH4(+). The protein operates within amino-acid degradation; L-histidine degradation into L-glutamate; N-formimidoyl-L-glutamate from L-histidine: step 1/3. The protein is Histidine ammonia-lyase of Cereibacter sphaeroides (strain ATCC 17029 / ATH 2.4.9) (Rhodobacter sphaeroides).